The following is a 1050-amino-acid chain: MLCWGYWSLGQPGISTNLQGIVAEPQVCGFISDRSVKEVACGGNHSVFLLEDGEVYTCGLNTKGQLGHEREGNKPEQIGALADQHIIHVACGESHSLALSDRGQLFSWGAGSDGQLGLMTTEDSVAVPRLIQKLNQQTILQVSCGNWHCLALAADGQFFTWGKNSHGQLGLGKEFPSQASPQRVRSLEGIPLAQVAAGGAHSFALSLSGAVFGWGMNNAGQLGLSDEKDRESPCHVKLLRTQKVVYISCGEEHTAVLTKSGGVFTFGAGSCGQLGHDSMNDEVNPRRVLELMGSEVTQIACGRQHTLAFVPSSGLIYAFGCGARGQLGTGHTCNVKCPSPVKGYWAAHSGQLSARADRFKYHIVKQIFSGGDQTFVLCSKYENYSPAVDFRTMNQAHYTSLINDETIAVWRQKLSEHNNANTINGVVQILSSAACWNGSFLEKKIDEHFKTSPKIPGIDLNSTRVLFEKLMNSQHSMILEQILNSFESCLIPQLSSSPPDVEAMRIYLILPEFPLLQDSKYYITLTIPLAMAILRLDTNPSKVLDNWWSQVCPKYFMKLVNLYKGAVLYLLRGRKTFLIPVLFNNYITAALKLLEKLYKVNLKVKHVEYDTFYIPEISNLVDIQEDYLMWFLHQAGMKARPSIIQDTVTLCSYPFIFDAQAKTKMLQTDAELQMQVAVNGANLQNVFMLLTLEPLLARSPFLVLHVRRNNLVGDALRELSIHSDIDLKKPLKVIFDGEEAVDAGGVTKEFFLLLLKELLNPIYGMFTYYQDSNLLWFSDTCFVEHNWFHLIGITCGLAIYNSTVVDLHFPLALYKKLLNVKPGLEDLKELSPTEGRSLQELLDYPGEDVEETFCLNFTICRESYGVIEQKKLIPGGDNVTVCKDNRQEFVDAYVNYVFQISVHEWYTAFSSGFLKVCGGKVLELFQPSELRAMMVGNSNYNWEELEETAIYKGDYSATHPTVKLFWETFHEFPLEKKKKFLLFLTGSDRIPIYGMASLQIVIQSTASGEEYLPVAHTCYNLLDLPKYSSKEILSARLTQALDNYEGFSLA.

RCC1 repeat units follow at residues 1-51, 52-101, 102-154, 156-207, 208-259, 261-311, and 313-366; these read MLCW…FLLE, DGEV…ALSD, RGQL…ALAA, GQFF…ALSL, SGAV…VLTK, GGVF…AFVP, and SGLI…IVKQ. The HECT domain maps to 951 to 1050; that stretch reads YKGDYSATHP…LDNYEGFSLA (100 aa). The active-site Glycyl thioester intermediate is the Cys1018.

Ubiquitinated; which promotes degradation by the proteasome.

It is found in the cytoplasm. Its subcellular location is the cytoplasmic vesicle. The catalysed reaction is S-ubiquitinyl-[E2 ubiquitin-conjugating enzyme]-L-cysteine + [acceptor protein]-L-lysine = [E2 ubiquitin-conjugating enzyme]-L-cysteine + N(6)-ubiquitinyl-[acceptor protein]-L-lysine.. It participates in protein modification; protein ubiquitination. Functionally, E3 ubiquitin-protein ligase which accepts ubiquitin from an E2 ubiquitin-conjugating enzyme in the form of a thioester and then directly transfers the ubiquitin to targeted substrates. In Homo sapiens (Human), this protein is Probable E3 ubiquitin-protein ligase HERC3 (HERC3).